A 189-amino-acid chain; its full sequence is MLFPRIIAASAQRKLSVYLKKGGLVAYPTESCYGLGCLPTLAKALGKLAHLKKRPQHKGMIVIGNQFEQLQPLLQMPSENLQDMLRKEWPAPKTFLLSAKSCVLPELRGKQRSKLAVRVPAHVGARRLCQALQTPLVSTSCNRAGKRACRTEREVRRQFGRDVWIVGGRIGRQKSPSQIIDGETGKRLR.

Residues 9 to 189 (ASAQRKLSVY…IDGETGKRLR (181 aa)) enclose the YrdC-like domain.

It belongs to the SUA5 family. TsaC subfamily.

The protein localises to the cytoplasm. The catalysed reaction is L-threonine + hydrogencarbonate + ATP = L-threonylcarbamoyladenylate + diphosphate + H2O. Functionally, required for the formation of a threonylcarbamoyl group on adenosine at position 37 (t(6)A37) in tRNAs that read codons beginning with adenine. Catalyzes the conversion of L-threonine, HCO(3)(-)/CO(2) and ATP to give threonylcarbamoyl-AMP (TC-AMP) as the acyladenylate intermediate, with the release of diphosphate. In Neisseria meningitidis serogroup C (strain 053442), this protein is Threonylcarbamoyl-AMP synthase.